The primary structure comprises 569 residues: Sulfite reductase [NADPH] hemoprotein beta-component (569 aa).

The [4Fe-4S] cluster site is built by cysteine 433, cysteine 439, cysteine 478, and cysteine 482. Cysteine 482 provides a ligand contact to siroheme.

Belongs to the nitrite and sulfite reductase 4Fe-4S domain family. As to quaternary structure, alpha(8)-beta(8). The alpha component is a flavoprotein, the beta component is a hemoprotein. Siroheme serves as cofactor. [4Fe-4S] cluster is required as a cofactor.

The catalysed reaction is hydrogen sulfide + 3 NADP(+) + 3 H2O = sulfite + 3 NADPH + 4 H(+). It functions in the pathway sulfur metabolism; hydrogen sulfide biosynthesis; hydrogen sulfide from sulfite (NADPH route): step 1/1. Its function is as follows. Component of the sulfite reductase complex that catalyzes the 6-electron reduction of sulfite to sulfide. This is one of several activities required for the biosynthesis of L-cysteine from sulfate. The chain is Sulfite reductase [NADPH] hemoprotein beta-component from Shewanella sediminis (strain HAW-EB3).